The primary structure comprises 560 residues: MSDILKKRSSMTTDGDNRAPNRAMLRAVGFTDEDFHKPMIGIASTWSEVTPCNIHINKLAEKVKEGVRTAGGVPQIYGTITVSDGITMGHEGMHFSLPSREVIADSIEIVSNAMRHDGVIAIGGCDKNMPGCLMALCRIDAPSIFVYGGTILPGHCDGQDVDIVSIFEAVGKFNAGKISREEFIRIEQNACPGAGSCGGMYTANTMSSAIEALGMSLPGSASMPAVSSRKSEDCYEAGKALINLIQKGVTPKRILTKKAFENAITVVLVLGGSTNAVLHLIAIAKEIGVDLTLEDFDRISKKTPHLADLKPGGRYAMTDLDKVGGVHGVMKYLLKEGMLHGDCLTVTGKTIAENLMDMPDLVPNQTIVRKKSEALHPSGPLVILKGNLAPEGAVAKISGLKKISITGPAKVFESEDDCFNAIMTDQIKPGDVIIIRYEGPKGGPGMREMLAVTSALVGKGLGEDVGLMTDGRFSGGTHGLVVGHISPEAFDGGPIAIVQNGDAVTIDSGKNLLQVEISQEEIQKRLKNWKPIEPRYKSGVLAKYAKLVQSATNGAITNLL.

Cysteine 52 provides a ligand contact to [2Fe-2S] cluster. Mg(2+) is bound at residue aspartate 84. Residue cysteine 125 participates in [2Fe-2S] cluster binding. Aspartate 126 and lysine 127 together coordinate Mg(2+). Lysine 127 is subject to N6-carboxylysine. Cysteine 197 provides a ligand contact to [2Fe-2S] cluster. Glutamate 448 lines the Mg(2+) pocket. Serine 474 functions as the Proton acceptor in the catalytic mechanism.

Belongs to the IlvD/Edd family. Homodimer. [2Fe-2S] cluster serves as cofactor. It depends on Mg(2+) as a cofactor.

The catalysed reaction is (2R)-2,3-dihydroxy-3-methylbutanoate = 3-methyl-2-oxobutanoate + H2O. It carries out the reaction (2R,3R)-2,3-dihydroxy-3-methylpentanoate = (S)-3-methyl-2-oxopentanoate + H2O. It functions in the pathway amino-acid biosynthesis; L-isoleucine biosynthesis; L-isoleucine from 2-oxobutanoate: step 3/4. Its pathway is amino-acid biosynthesis; L-valine biosynthesis; L-valine from pyruvate: step 3/4. In terms of biological role, functions in the biosynthesis of branched-chain amino acids. Catalyzes the dehydration of (2R,3R)-2,3-dihydroxy-3-methylpentanoate (2,3-dihydroxy-3-methylvalerate) into 2-oxo-3-methylpentanoate (2-oxo-3-methylvalerate) and of (2R)-2,3-dihydroxy-3-methylbutanoate (2,3-dihydroxyisovalerate) into 2-oxo-3-methylbutanoate (2-oxoisovalerate), the penultimate precursor to L-isoleucine and L-valine, respectively. This Leptospira borgpetersenii serovar Hardjo-bovis (strain JB197) protein is Dihydroxy-acid dehydratase.